The chain runs to 250 residues: 3-deoxy-manno-octulosonate cytidylyltransferase (250 aa).

Belongs to the KdsB family.

The protein resides in the cytoplasm. It catalyses the reaction 3-deoxy-alpha-D-manno-oct-2-ulosonate + CTP = CMP-3-deoxy-beta-D-manno-octulosonate + diphosphate. It functions in the pathway nucleotide-sugar biosynthesis; CMP-3-deoxy-D-manno-octulosonate biosynthesis; CMP-3-deoxy-D-manno-octulosonate from 3-deoxy-D-manno-octulosonate and CTP: step 1/1. The protein operates within bacterial outer membrane biogenesis; lipopolysaccharide biosynthesis. Its function is as follows. Activates KDO (a required 8-carbon sugar) for incorporation into bacterial lipopolysaccharide in Gram-negative bacteria. The polypeptide is 3-deoxy-manno-octulosonate cytidylyltransferase (Legionella pneumophila (strain Paris)).